The following is an 882-amino-acid chain: DNA mismatch repair protein MutS (882 aa).

Residue 626 to 633 (GPNMAGKS) coordinates ATP.

The protein belongs to the DNA mismatch repair MutS family.

In terms of biological role, this protein is involved in the repair of mismatches in DNA. It is possible that it carries out the mismatch recognition step. This protein has a weak ATPase activity. The sequence is that of DNA mismatch repair protein MutS from Anaeromyxobacter sp. (strain Fw109-5).